The sequence spans 626 residues: Elongation factor 4 (626 aa).

One can recognise a tr-type G domain in the interval 14 to 195 (SVIRNFCIIA…QIVMDVPAPH (182 aa)). Residues 26 to 31 (DHGKST) and 142 to 145 (NKID) each bind GTP. Residues 603-626 (LSTGEDSNDRDTKDKIRAAQKTEG) form a disordered region. Basic and acidic residues predominate over residues 609 to 626 (SNDRDTKDKIRAAQKTEG).

The protein belongs to the TRAFAC class translation factor GTPase superfamily. Classic translation factor GTPase family. LepA subfamily.

The protein resides in the cell membrane. It catalyses the reaction GTP + H2O = GDP + phosphate + H(+). Its function is as follows. Required for accurate and efficient protein synthesis under certain stress conditions. May act as a fidelity factor of the translation reaction, by catalyzing a one-codon backward translocation of tRNAs on improperly translocated ribosomes. Back-translocation proceeds from a post-translocation (POST) complex to a pre-translocation (PRE) complex, thus giving elongation factor G a second chance to translocate the tRNAs correctly. Binds to ribosomes in a GTP-dependent manner. This Bifidobacterium longum subsp. infantis (strain ATCC 15697 / DSM 20088 / JCM 1222 / NCTC 11817 / S12) protein is Elongation factor 4.